A 667-amino-acid polypeptide reads, in one-letter code: UvrABC system protein B (667 aa).

Residues 31-414 (KNFEAGAKAQ…EAEQTDIQVD (384 aa)) enclose the Helicase ATP-binding domain. Position 44–51 (44–51 (GATGTGKT)) interacts with ATP. The short motif at 97–120 (YYDYYQPEAYVPSSDTYIEKDSSI) is the Beta-hairpin element. The Helicase C-terminal domain occupies 435 to 597 (QIDDLVGEIN…ITPKTIIKPI (163 aa)). A UVR domain is found at 630 to 665 (LEMVERLSEQMRLAAKKLDFEQAATLRDTILELKSE).

The protein belongs to the UvrB family. Forms a heterotetramer with UvrA during the search for lesions. Interacts with UvrC in an incision complex.

The protein localises to the cytoplasm. In terms of biological role, the UvrABC repair system catalyzes the recognition and processing of DNA lesions. A damage recognition complex composed of 2 UvrA and 2 UvrB subunits scans DNA for abnormalities. Upon binding of the UvrA(2)B(2) complex to a putative damaged site, the DNA wraps around one UvrB monomer. DNA wrap is dependent on ATP binding by UvrB and probably causes local melting of the DNA helix, facilitating insertion of UvrB beta-hairpin between the DNA strands. Then UvrB probes one DNA strand for the presence of a lesion. If a lesion is found the UvrA subunits dissociate and the UvrB-DNA preincision complex is formed. This complex is subsequently bound by UvrC and the second UvrB is released. If no lesion is found, the DNA wraps around the other UvrB subunit that will check the other stand for damage. The polypeptide is UvrABC system protein B (Latilactobacillus sakei subsp. sakei (strain 23K) (Lactobacillus sakei subsp. sakei)).